The following is a 250-amino-acid chain: Pyrroloquinoline-quinone synthase (250 aa).

This sequence belongs to the PqqC family.

It catalyses the reaction 6-(2-amino-2-carboxyethyl)-7,8-dioxo-1,2,3,4,7,8-hexahydroquinoline-2,4-dicarboxylate + 3 O2 = pyrroloquinoline quinone + 2 H2O2 + 2 H2O + H(+). The protein operates within cofactor biosynthesis; pyrroloquinoline quinone biosynthesis. In terms of biological role, ring cyclization and eight-electron oxidation of 3a-(2-amino-2-carboxyethyl)-4,5-dioxo-4,5,6,7,8,9-hexahydroquinoline-7,9-dicarboxylic-acid to PQQ. The chain is Pyrroloquinoline-quinone synthase from Xanthomonas oryzae pv. oryzae (strain PXO99A).